Here is a 318-residue protein sequence, read N- to C-terminus: MKNLNLVALPHFVSVENLKNDEVKALIKRAEYFKKGGAVARLTSPVYVTNMFFEDSSRTHTSFEMAERKLGLTVIPFDPAHSSVNKGETLYDTSLVMNALGIDLEVIRHSQNEYYEDLINLKQHQKLNIGVINAGDGSGQHPSQCMLDMMTIHEHFGHFKGLKVAIVGDITNSRVAKSDMELLTKLGAEVYFSGPECWYSEEFDQYGKHEELDKLIPKMDVMMLLRVQHERHSGDPNEKKFDAHRYHEKYGINHKRYEAMKKDAIIMHPGPINHNVELSGDLVESDKCMFVRQMENGVFMRMAMLEAVLRGRKLGGLE.

The carbamoyl phosphate site is built by Arg58 and Thr59. Lys86 is an L-aspartate binding site. The carbamoyl phosphate site is built by Arg108, His141, and Gln144. 2 residues coordinate L-aspartate: Arg174 and Arg226. Gly270 and Pro271 together coordinate carbamoyl phosphate.

The protein belongs to the aspartate/ornithine carbamoyltransferase superfamily. ATCase family. In terms of assembly, heterododecamer (2C3:3R2) of six catalytic PyrB chains organized as two trimers (C3), and six regulatory PyrI chains organized as three dimers (R2).

It carries out the reaction carbamoyl phosphate + L-aspartate = N-carbamoyl-L-aspartate + phosphate + H(+). It functions in the pathway pyrimidine metabolism; UMP biosynthesis via de novo pathway; (S)-dihydroorotate from bicarbonate: step 2/3. Functionally, catalyzes the condensation of carbamoyl phosphate and aspartate to form carbamoyl aspartate and inorganic phosphate, the committed step in the de novo pyrimidine nucleotide biosynthesis pathway. The chain is Aspartate carbamoyltransferase catalytic subunit from Lactobacillus delbrueckii subsp. bulgaricus (strain ATCC 11842 / DSM 20081 / BCRC 10696 / JCM 1002 / NBRC 13953 / NCIMB 11778 / NCTC 12712 / WDCM 00102 / Lb 14).